The sequence spans 156 residues: Ribosomal RNA large subunit methyltransferase H (156 aa).

S-adenosyl-L-methionine contacts are provided by residues leucine 73, glycine 104, and 123-128 (LSSLTL).

This sequence belongs to the RNA methyltransferase RlmH family. In terms of assembly, homodimer.

The protein localises to the cytoplasm. The catalysed reaction is pseudouridine(1915) in 23S rRNA + S-adenosyl-L-methionine = N(3)-methylpseudouridine(1915) in 23S rRNA + S-adenosyl-L-homocysteine + H(+). In terms of biological role, specifically methylates the pseudouridine at position 1915 (m3Psi1915) in 23S rRNA. This chain is Ribosomal RNA large subunit methyltransferase H, found in Bordetella petrii (strain ATCC BAA-461 / DSM 12804 / CCUG 43448).